We begin with the raw amino-acid sequence, 1237 residues long: Anion exchange protein 2 (1237 aa).

Residues 1 to 237 are disordered; it reads MSSAPRRPAS…SYNLQERRRI (237 aa). The Cytoplasmic portion of the chain corresponds to 1-703; it reads MSSAPRRPAS…SDFRDALDPQ (703 aa). 2 stretches are compositionally biased toward basic and acidic residues: residues 37–49 and 58–75; these read ELHR…RFEE and GGEE…EYHR. Composition is skewed to basic residues over residues 76–85 and 94–110; these read QSSHHIHHPL and RRRK…RRRP. Residue Ser113 is modified to Phosphoserine. The span at 122-133 shows a compositional bias: acidic residues; sequence EEGEEDEEEANE. The segment covering 137–151 has biased composition (low complexity); it reads ARAPTEPSPASTPSS. Phosphoserine is present on residues Ser144, Ser170, and Ser172. The span at 206–215 shows a compositional bias: gly residues; the sequence is TAGGDNGGAS. The residue at position 239 (Ser239) is a Phosphoserine. A Phosphothreonine modification is found at Thr253. At Lys270 the chain carries N6-methyllysine. Residues 281–316 form a disordered region; that stretch reads RRHLVRKNAKGSAQSSREGREPGPTPRSRPRAPHKP. Phosphoserine is present on Ser439. Residues 445–464 are disordered; the sequence is SLLGHHHGQGAESDPHVTEP. 4 consecutive transmembrane segments (helical) span residues 704 to 727, 733 to 770, 790 to 812, and 822 to 843; these read CVAA…GLLG, LIGV…LLVF, VWIG…SFLV, and IFAF…IKIF. The membrane (anion exchange) stretch occupies residues 704-1237; it reads CVAAVIFIYF…DEYNEMPMPV (534 aa). Residues 844 to 896 lie on the Extracellular side of the membrane; sequence QEHPLHGCSVSNSSETDSSENATWAGAGSTLGPANRSSAGQAGQGRPRGQPNT. Asn855, Asn864, and Asn878 each carry an N-linked (GlcNAc...) asparagine glycan. Residues 897 to 914 form a helical membrane-spanning segment; the sequence is ALLSLVLMAGTFFIAFFL. Residues 915–929 are Cytoplasmic-facing; sequence RKFKNSRFFPGRIRR. Helical transmembrane passes span 930–950, 984–1006, 1032–1053, 1087–1132, and 1159–1195; these read VIGD…DYSI, PFPV…LIFM, LLLI…LAAA, VTGL…IQFY, and MHLF…TVPL. Cys1169 carries the S-palmitoyl cysteine lipid modification.

The protein belongs to the anion exchanger (TC 2.A.31) family. Expressed in the ileum (at protein level).

It is found in the cell membrane. Its subcellular location is the apical cell membrane. The protein resides in the basolateral cell membrane. The catalysed reaction is hydrogencarbonate(in) + chloride(out) = hydrogencarbonate(out) + chloride(in). Functionally, sodium-independent anion exchanger which mediates the electroneutral exchange of chloride for bicarbonate ions across the cell membrane. Plays an important role in osteoclast differentiation and function. Regulates bone resorption and calpain-dependent actin cytoskeleton organization in osteoclasts via anion exchange-dependent control of pH. Essential for intracellular pH regulation in CD8(+) T-cells upon CD3 stimulation, modulating CD8(+) T-cell response. This Oryctolagus cuniculus (Rabbit) protein is Anion exchange protein 2 (SLC4A2).